Consider the following 204-residue polypeptide: Dual specificity protein phosphatase 18 (204 aa).

The Tyrosine-protein phosphatase domain maps to 19 to 160; sequence GLSQITKSLF…LIHYEFQLFG (142 aa). A sufficient for mitochondrial localization region spans residues 95–141; sequence MKQGRTLLHCAAGVSRSAALCLAYLMKYHVMSLLDAHAWTKSRRPII. The Phosphocysteine intermediate role is filled by C104.

This sequence belongs to the protein-tyrosine phosphatase family. Non-receptor class dual specificity subfamily.

Its subcellular location is the cytoplasm. It is found in the nucleus. The protein resides in the mitochondrion inner membrane. The enzyme catalyses O-phospho-L-tyrosyl-[protein] + H2O = L-tyrosyl-[protein] + phosphate. It carries out the reaction O-phospho-L-seryl-[protein] + H2O = L-seryl-[protein] + phosphate. It catalyses the reaction O-phospho-L-threonyl-[protein] + H2O = L-threonyl-[protein] + phosphate. In terms of biological role, can dephosphorylate single and diphosphorylated synthetic MAPK peptides, with preference for the phosphotyrosine and diphosphorylated forms over phosphothreonine. In vitro, dephosphorylates p-nitrophenyl phosphate (pNPP). The polypeptide is Dual specificity protein phosphatase 18 (Dusp18) (Rattus norvegicus (Rat)).